The sequence spans 138 residues: MAPK kinase substrate protein At1g80180 (138 aa).

A disordered region spans residues 52 to 138 (TSEVQDQTTK…RKRPAKRRSR (87 aa)). Basic and acidic residues predominate over residues 69–81 (KPIRTDGGMERSR). Ser98 carries the phosphoserine modification. Ser105 carries the phosphoserine; by MAPK6 modification. The span at 121–138 (QPGKKVNQRKRPAKRRSR) shows a compositional bias: basic residues.

Expressed in developing cotyledons, mature cotyledons, cotyledon epidermis and stomata.

In terms of biological role, may play a role in the regulation of stomata patterning. This is MAPK kinase substrate protein At1g80180 from Arabidopsis thaliana (Mouse-ear cress).